The chain runs to 562 residues: Protein wntless (562 aa).

The Cytoplasmic portion of the chain corresponds to 1–13 (MSGTILENLSGRK). A helical membrane pass occupies residues 14-34 (LSILVSSLMLCQVACFLMGGL). At 35–239 (YAPVPAGHQT…AIHQNGGFTQ (205 aa)) the chain is on the lumenal side. Asn58 and Asn103 each carry an N-linked (GlcNAc...) asparagine glycan. Residues 240–260 (VWLLLKTLLFPFVVGIMIWFW) traverse the membrane as a helical segment. Residues 261 to 270 (RRVHILQRSP) lie on the Cytoplasmic side of the membrane. A helical membrane pass occupies residues 271–291 (ALLEYMLLYLGGALSFLNLPL). Topologically, residues 292–311 (EYLTLSIEMPYMLLLSDVRQ) are lumenal. The helical transmembrane segment at 312 to 332 (GIFYAMLLSFWLVFAGEHMLI) threads the bilayer. Residues 333-344 (QDTPNKSTIRSR) lie on the Cytoplasmic side of the membrane. The helical transmembrane segment at 345–365 (YWKHLSAVVVGCISLFVFDIC) threads the bilayer. Residues 366–390 (ERGVQLRNPFYSIWTTPLGAKVAMS) lie on the Lumenal side of the membrane. A helical membrane pass occupies residues 391 to 411 (FIVLAGVSAAIYFLFLCFMVW). At 412-441 (KVFKDIGDKRTSLPSMSQARRLHYEGLIYR) the chain is on the cytoplasmic side. Residues 442–462 (FKFLMLATLLCAGLTVAGFIM) traverse the membrane as a helical segment. Residues 463-482 (GQMAEGHWKWNEDIEIQLTS) are Lumenal-facing. Residues 483–503 (AFLTGVYGMWNIYIFALIILY) form a helical membrane-spanning segment. Topologically, residues 504–562 (APSHKQWPTMRHSDETTQSNENIVASAASEEIEFSNLPSDSNPSEISSLTSFTRKVAFD) are cytoplasmic.

It belongs to the wntless family. In terms of assembly, interacts with wg; in the Golgi. Interacts with Vps35, a component of the retromer complex; wls stability is regulated by Vps35.

The protein resides in the presynaptic cell membrane. It localises to the postsynaptic cell membrane. The protein localises to the cell membrane. Its subcellular location is the endoplasmic reticulum membrane. It is found in the endosome membrane. The protein resides in the golgi apparatus membrane. Its function is as follows. A segment polarity gene required for wingless (wg)-dependent patterning processes, acting in both wg-sending cells and wg-target cells. In non-neuronal cells wls directs wg secretion. The wls traffic loop encompasses the Golgi, the cell surface, an endocytic compartment and a retrograde route leading back to the Golgi, and involves clathrin-mediated endocytosis and the retromer complex (a conserved protein complex consisting of Vps35 and Vps26). In neuronal cells (the larval motorneuron NMJ), the wg signal moves across the synapse via the release of wls-containing exosome-like vesicles. Postsynaptic wls is required for the trafficking of fz2 through the fz2-interacting protein Grip. In Drosophila virilis (Fruit fly), this protein is Protein wntless.